Consider the following 144-residue polypeptide: D-aminoacyl-tRNA deacylase (144 aa).

The short motif at 136 to 137 (GP) is the Gly-cisPro motif, important for rejection of L-amino acids element.

It belongs to the DTD family. As to quaternary structure, homodimer.

Its subcellular location is the cytoplasm. It carries out the reaction glycyl-tRNA(Ala) + H2O = tRNA(Ala) + glycine + H(+). The catalysed reaction is a D-aminoacyl-tRNA + H2O = a tRNA + a D-alpha-amino acid + H(+). In terms of biological role, an aminoacyl-tRNA editing enzyme that deacylates mischarged D-aminoacyl-tRNAs. Also deacylates mischarged glycyl-tRNA(Ala), protecting cells against glycine mischarging by AlaRS. Acts via tRNA-based rather than protein-based catalysis; rejects L-amino acids rather than detecting D-amino acids in the active site. By recycling D-aminoacyl-tRNA to D-amino acids and free tRNA molecules, this enzyme counteracts the toxicity associated with the formation of D-aminoacyl-tRNA entities in vivo and helps enforce protein L-homochirality. The polypeptide is D-aminoacyl-tRNA deacylase (Haemophilus influenzae (strain PittEE)).